The sequence spans 1143 residues: DNA-directed RNA polymerase subunit beta (1143 aa).

This sequence belongs to the RNA polymerase beta chain family. As to quaternary structure, in plastids the minimal PEP RNA polymerase catalytic core is composed of four subunits: alpha, beta, beta', and beta''. When a (nuclear-encoded) sigma factor is associated with the core the holoenzyme is formed, which can initiate transcription.

It localises to the plastid. The protein resides in the chloroplast. It catalyses the reaction RNA(n) + a ribonucleoside 5'-triphosphate = RNA(n+1) + diphosphate. DNA-dependent RNA polymerase catalyzes the transcription of DNA into RNA using the four ribonucleoside triphosphates as substrates. The chain is DNA-directed RNA polymerase subunit beta from Porphyra purpurea (Red seaweed).